Consider the following 422-residue polypeptide: Vitellogenin-2 (422 aa).

Residues 1-20 form the signal peptide; sequence MNPLTIFCLVAVLLSAATAH. Disordered regions lie at residues 161–191 and 399–422; these read QGEQGDDSNQDTSSSEESSNRPNGQQPKPNG and FGKSAPAQKQNSYHGIHQGAGRPN. Residues 180–189 are compositionally biased toward polar residues; that stretch reads NRPNGQQPKP.

The protein belongs to the AB hydrolase superfamily. Lipase family. In terms of tissue distribution, synthesized in the fat body and ovarian follicle cells and accumulate in the oocyte.

The protein resides in the secreted. Functionally, vitellogenin is the major yolk protein of eggs where it is used as a food source during embryogenesis. The protein is Vitellogenin-2 (VG2-delta) of Ceratitis capitata (Mediterranean fruit fly).